We begin with the raw amino-acid sequence, 490 residues long: Trigger factor (490 aa).

Positions 161-247 (GDQVIVDIEA…VHEVKEAELP (87 aa)) constitute a PPIase FKBP-type domain. Over residues 441–460 (AEPAEGTEPAAEEAVTAPEV) the composition is skewed to low complexity. The interval 441–490 (AEPAEGTEPAAEEAVTAPEVVDGETTPASESAESLAVTETGSRADDDQAS) is disordered. The span at 466–481 (TPASESAESLAVTETG) shows a compositional bias: polar residues.

The protein belongs to the FKBP-type PPIase family. Tig subfamily.

The protein resides in the cytoplasm. The catalysed reaction is [protein]-peptidylproline (omega=180) = [protein]-peptidylproline (omega=0). In terms of biological role, involved in protein export. Acts as a chaperone by maintaining the newly synthesized protein in an open conformation. Functions as a peptidyl-prolyl cis-trans isomerase. This chain is Trigger factor, found in Thermomicrobium roseum (strain ATCC 27502 / DSM 5159 / P-2).